We begin with the raw amino-acid sequence, 253 residues long: Ribosomal RNA small subunit methyltransferase J (253 aa).

S-adenosyl-L-methionine-binding positions include 123 to 124 and aspartate 176; that span reads ER.

Belongs to the methyltransferase superfamily. RsmJ family.

The protein localises to the cytoplasm. The catalysed reaction is guanosine(1516) in 16S rRNA + S-adenosyl-L-methionine = N(2)-methylguanosine(1516) in 16S rRNA + S-adenosyl-L-homocysteine + H(+). Specifically methylates the guanosine in position 1516 of 16S rRNA. This chain is Ribosomal RNA small subunit methyltransferase J, found in Magnetococcus marinus (strain ATCC BAA-1437 / JCM 17883 / MC-1).